Consider the following 302-residue polypeptide: NAD kinase 2 (302 aa).

Aspartate 78 (proton acceptor) is an active-site residue. NAD(+)-binding positions include 78-79 (DG), 152-153 (NE), aspartate 182, 193-198 (TAYALS), and alanine 217.

It belongs to the NAD kinase family. It depends on a divalent metal cation as a cofactor.

The protein resides in the cytoplasm. It carries out the reaction NAD(+) + ATP = ADP + NADP(+) + H(+). In terms of biological role, involved in the regulation of the intracellular balance of NAD and NADP, and is a key enzyme in the biosynthesis of NADP. Catalyzes specifically the phosphorylation on 2'-hydroxyl of the adenosine moiety of NAD to yield NADP. The protein is NAD kinase 2 of Parasynechococcus marenigrum (strain WH8102).